Reading from the N-terminus, the 577-residue chain is MNIQALLSEKVRQAMIAAGAPADCEPQVRQSAKVQFGDYQANGMMAVAKKLGMAPRQLAEQVLTHLDLNGIASKVEIAGPGFINIFLDPAFLAEHVQQALASDRLGVAMPEKQTIVVDYSAPNVAKEMHVGHLRSTIIGDAAVRTLEFLGHKVIRANHVGDWGTQFGMLIAWLEKQQQENAGEMELADLEGFYRDAKKHYDEDEEFAERARNYVVKLQSGDEYFREMWRKLVDITMTQNQITYDRLNVTLTRDDVMGESLYNPMLPGIVADLKAKGLAVESEGATVVFLDEFKNKEGEPMGVIIQKKDGGYLYTTTDIACAKYRYETLHADRVLYYIDSRQHQHLMQAWAIVRKAGYVPESVPLEHHMFGMMLGKDGKPFKTRAGGTVKLADLLDEALERARRLVAEKNPDMPADELEKLANAVGIGAVKYADLSKNRTTDYIFDWDNMLAFEGNTAPYMQYAYTRVLSVFRKAEINEEQLAAAPVIIREDREAQLAARLLQFEETLTVVAREGTPHVMCAYLYDLAGLFSGFYEHCPILSAENEEVRNSRLKLAQLTAKTLKLGLDTLGIETVERM.

Positions 122–132 match the 'HIGH' region motif; it reads PNVAKEMHVGH.

Belongs to the class-I aminoacyl-tRNA synthetase family. Monomer.

It localises to the cytoplasm. The catalysed reaction is tRNA(Arg) + L-arginine + ATP = L-arginyl-tRNA(Arg) + AMP + diphosphate. The sequence is that of Arginine--tRNA ligase from Escherichia coli O6:K15:H31 (strain 536 / UPEC).